The chain runs to 225 residues: Putative tyrosine-protein phosphatase OCA1 (225 aa).

A compositionally biased stretch (acidic residues) spans 1-11; that stretch reads MTDNCREDDDN. The segment at 1-24 is disordered; it reads MTDNCREDDDNLGTSGDNALSAPT. Polar residues predominate over residues 12 to 24; the sequence is LGTSGDNALSAPT. In terms of domain architecture, Tyrosine-protein phosphatase spans 42-196; that stretch reads NFCPVERYLY…FDTKSVTIDK (155 aa). Cys138 serves as the catalytic Phosphocysteine intermediate.

This sequence belongs to the protein-tyrosine phosphatase family.

Its subcellular location is the cytoplasm. It carries out the reaction O-phospho-L-tyrosyl-[protein] + H2O = L-tyrosyl-[protein] + phosphate. In terms of biological role, putative tyrosine-protein phosphatase required for protection against superoxide stress. In Eremothecium gossypii (strain ATCC 10895 / CBS 109.51 / FGSC 9923 / NRRL Y-1056) (Yeast), this protein is Putative tyrosine-protein phosphatase OCA1 (OCA1).